The primary structure comprises 195 residues: Probable GTP-binding protein EngB (195 aa).

One can recognise an EngB-type G domain in the interval 24–195 (DWPEIALAGR…EAWTAILKYL (172 aa)). Residues 32 to 39 (GRSNVGKS), 59 to 63 (GKTQL), 77 to 80 (DVPG), 144 to 147 (TKAD), and 176 to 178 (FSS) each bind GTP. Mg(2+) contacts are provided by Ser39 and Thr61.

It belongs to the TRAFAC class TrmE-Era-EngA-EngB-Septin-like GTPase superfamily. EngB GTPase family. Requires Mg(2+) as cofactor.

Necessary for normal cell division and for the maintenance of normal septation. In Lactococcus lactis subsp. cremoris (strain MG1363), this protein is Probable GTP-binding protein EngB.